A 222-amino-acid polypeptide reads, in one-letter code: MCLRLGGLSVGDFRKVLMKTGLVLVVLGHVSFITAALFHGTVLRYVGTPQDAVALQYCVVNILSVTSAIVVITSGIAAIVLSRYLPSTPLRWTVFSSSVACALLSLTCALGLLASIAMTFATQGKALLAACTFGSSELLALAPDCPFDPTRIYSSSLCLWGIALVLCVAENVFAVRCAQLTHQLLELRPWWGKSSHHMMRENPELVEGRDLLSCTSSEPLTL.

Transmembrane regions (helical) follow at residues 22–42, 62–82, 100–120, and 155–175; these read LVLVVLGHVSFITAALFHGTV, ILSVTSAIVVITSGIAAIVLS, ACALLSLTCALGLLASIAMTF, and SSLCLWGIALVLCVAENVFAV.

The protein belongs to the TMEM54 family. Ubiquitously expressed in cancer cell lines.

The protein resides in the membrane. This is Transmembrane protein 54 (TMEM54) from Homo sapiens (Human).